Reading from the N-terminus, the 314-residue chain is Ribosomal protein L11 methyltransferase (314 aa).

The S-adenosyl-L-methionine site is built by threonine 163, glycine 184, aspartate 206, and asparagine 248.

It belongs to the methyltransferase superfamily. PrmA family.

The protein localises to the cytoplasm. The enzyme catalyses L-lysyl-[protein] + 3 S-adenosyl-L-methionine = N(6),N(6),N(6)-trimethyl-L-lysyl-[protein] + 3 S-adenosyl-L-homocysteine + 3 H(+). In terms of biological role, methylates ribosomal protein L11. The chain is Ribosomal protein L11 methyltransferase from Lactobacillus acidophilus (strain ATCC 700396 / NCK56 / N2 / NCFM).